The primary structure comprises 206 residues: Large ribosomal subunit protein uL4 (206 aa).

Residues 46 to 95 (GNRAQKTRAEVKHSTKKPWRQKGTGRARSGMTSSPLWRKGGRAFPNKPDE) are disordered. Positions 59 to 70 (STKKPWRQKGTG) are enriched in basic residues.

The protein belongs to the universal ribosomal protein uL4 family. Part of the 50S ribosomal subunit.

Functionally, one of the primary rRNA binding proteins, this protein initially binds near the 5'-end of the 23S rRNA. It is important during the early stages of 50S assembly. It makes multiple contacts with different domains of the 23S rRNA in the assembled 50S subunit and ribosome. Forms part of the polypeptide exit tunnel. This chain is Large ribosomal subunit protein uL4, found in Neisseria meningitidis serogroup C (strain 053442).